We begin with the raw amino-acid sequence, 369 residues long: Chaperone protein DnaJ (369 aa).

A J domain is found at 4-69 (SYYEILEVEK…KKRALYDRYG (66 aa)). The CR-type zinc finger occupies 130–207 (GCKKTIKVQY…CKGKTYILKD (78 aa)). Positions 143, 146, 159, 162, 181, 184, 195, and 198 each coordinate Zn(2+). 4 CXXCXGXG motif repeats span residues 143–150 (CESCDGTG), 159–166 (CKQCNGQG), 181–188 (CGACQGKG), and 195–202 (CQACKGKT).

Belongs to the DnaJ family. As to quaternary structure, homodimer. The cofactor is Zn(2+).

The protein localises to the cytoplasm. Functionally, participates actively in the response to hyperosmotic and heat shock by preventing the aggregation of stress-denatured proteins and by disaggregating proteins, also in an autonomous, DnaK-independent fashion. Unfolded proteins bind initially to DnaJ; upon interaction with the DnaJ-bound protein, DnaK hydrolyzes its bound ATP, resulting in the formation of a stable complex. GrpE releases ADP from DnaK; ATP binding to DnaK triggers the release of the substrate protein, thus completing the reaction cycle. Several rounds of ATP-dependent interactions between DnaJ, DnaK and GrpE are required for fully efficient folding. Also involved, together with DnaK and GrpE, in the DNA replication of plasmids through activation of initiation proteins. In Helicobacter pylori (strain ATCC 700392 / 26695) (Campylobacter pylori), this protein is Chaperone protein DnaJ.